The primary structure comprises 577 residues: Adenine deaminase (577 aa).

This sequence belongs to the metallo-dependent hydrolases superfamily. Adenine deaminase family. Mn(2+) is required as a cofactor.

The enzyme catalyses adenine + H2O + H(+) = hypoxanthine + NH4(+). This is Adenine deaminase from Bacillus velezensis (strain DSM 23117 / BGSC 10A6 / LMG 26770 / FZB42) (Bacillus amyloliquefaciens subsp. plantarum).